The sequence spans 362 residues: G-prodeshotein coupled receptor 4 (362 aa).

Over 1–8 the chain is Extracellular; sequence MGNHTWEG. N-linked (GlcNAc...) asparagine glycosylation is present at Asn3. Residues 9 to 45 traverse the membrane as a helical segment; sequence CHVDSRVDHLFPPSLYIFVIGVGLPTNCLALWAAYRQ. Disulfide bonds link Cys9–Cys258 and Cys90–Cys168. Topologically, residues 46 to 49 are cytoplasmic; it reads VQQR. A helical transmembrane segment spans residues 50–80; the sequence is NELGVYLMNLSIADLLYICTLPLWVDYFLHH. Topologically, residues 81-85 are extracellular; that stretch reads DNWIH. Residues 86–121 form a helical membrane-spanning segment; that stretch reads GPGSCKLFGFIFYTNIYISIAFLCCISVDRYLAVAH. Residues 122 to 129 are Cytoplasmic-facing; the sequence is PLRFARLR. The chain crosses the membrane as a helical span at residues 130 to 156; the sequence is RVKTAVAVSSVVWATELGANSAPLFHD. The Extracellular portion of the chain corresponds to 157-172; sequence ELFRDRYNHTFCFEKF. The segment at 157–172 is extracellular loop 2 (ECL2); the sequence is ELFRDRYNHTFCFEKF. Residue Asn164 is glycosylated (N-linked (GlcNAc...) asparagine). A helical membrane pass occupies residues 173-210; it reads PMEGWVAWMNLYRVFVGFLFPWALMLLSYRGILRAVRG. The Cytoplasmic segment spans residues 211–214; it reads SVST. Residues 215 to 250 traverse the membrane as a helical segment; sequence ERQEKAKIKRLALSLIAIVLVCFAPYHVLLLSRSAI. Over 251–260 the chain is Extracellular; the sequence is YLGRPWDCGF. The chain crosses the membrane as a helical span at residues 261–289; the sequence is EERVFSAYHSSLAFTSLNCVADPILYCLV. Residues 290–362 lie on the Cytoplasmic side of the membrane; it reads NEGARSDVAK…VQLKMLPPAQ (73 aa). Positions 335-362 are disordered; it reads AKAMTGSWAATPPSQGDQVQLKMLPPAQ.

Belongs to the G-protein coupled receptor 1 family.

It localises to the cell membrane. With respect to regulation, activated by a network of residues that connects an extracellular-facing cavity to Glu-145, a conserved charged residue buried in the transmembrane core of the receptor. Protonation likely drives conformational changes in extracellular loop 2 (ECL2), which stabilizes movement of transmembrane 3 (TM3) and a series of rearrangements that connect the extracellular-facing cavity to Glu-145, a residue only conserved in proton-sensing G-protein coupled receptors. Its function is as follows. Proton-sensing G-protein coupled receptor activated by extracellular pH, which is required to monitor pH changes and generate adaptive reactions. Activated by an optimal pH of 6.8-7.2. Ligand binding causes a conformation change that triggers signaling via guanine nucleotide-binding proteins (G proteins) and modulates the activity of downstream effectors, such as adenylate cyclase. GPR4 is mainly coupled to G(s) G proteins and mediates activation of adenylate cyclase activity. May also couple with G(q) and G(12)/G(13) G proteins. Acts as a key regulator of respiratory sensitivity to CO2/H(+) in brain retrotrapezoid nucleus neurons: acts by mediating detection of protons generated by the formation of carbonic acid in the blood, an important mechanism to impulse to breathe. Also acts as a regulator of acid secretion in the kidney collecting duct by maintaining acid-base homeostasis in the kidney. Acidosis-induced GPR4 activation increases paracellular gap formation and permeability of vascular endothelial cells, possibly through the G(12)/G(13)/Rho GTPase signaling pathway. This Homo sapiens (Human) protein is G-prodeshotein coupled receptor 4.